Reading from the N-terminus, the 244-residue chain is rRNA adenine N-6-methyltransferase (244 aa).

6 residues coordinate S-adenosyl-L-methionine: Asn11, Ile13, Gly38, Glu59, Asp84, and Asn101.

This sequence belongs to the class I-like SAM-binding methyltransferase superfamily. rRNA adenine N(6)-methyltransferase family.

It carries out the reaction adenosine(2085) in 23S rRNA + 2 S-adenosyl-L-methionine = N(6)-dimethyladenosine(2085) in 23S rRNA + 2 S-adenosyl-L-homocysteine + 2 H(+). In terms of biological role, this protein produces a dimethylation of the adenine residue at position 2085 in 23S rRNA, resulting in reduced affinity between ribosomes and macrolide-lincosamide-streptogramin B antibiotics. This Staphylococcus aureus protein is rRNA adenine N-6-methyltransferase (ermC).